The chain runs to 689 residues: Glycine--tRNA ligase beta subunit (689 aa).

The protein belongs to the class-II aminoacyl-tRNA synthetase family. In terms of assembly, tetramer of two alpha and two beta subunits.

The protein localises to the cytoplasm. The catalysed reaction is tRNA(Gly) + glycine + ATP = glycyl-tRNA(Gly) + AMP + diphosphate. This Enterobacter sp. (strain 638) protein is Glycine--tRNA ligase beta subunit.